Reading from the N-terminus, the 557-residue chain is CTP synthase (557 aa).

Positions 1–267 (MAKFVFVTGG…CREVLDVLDL (267 aa)) are amidoligase domain. Ser13 lines the CTP pocket. Residue Ser13 participates in UTP binding. ATP-binding positions include 14–19 (SIGKGI) and Asp71. Mg(2+)-binding residues include Asp71 and Glu141. CTP contacts are provided by residues 148 to 150 (DIE), 188 to 193 (KTKPTQ), and Lys224. UTP is bound by residues 188 to 193 (KTKPTQ) and Lys224. Positions 292-534 (KVALVGKYVQ…IEAAQQRLPC (243 aa)) constitute a Glutamine amidotransferase type-1 domain. Gly354 is an L-glutamine binding site. The active-site Nucleophile; for glutamine hydrolysis is the Cys381. L-glutamine is bound by residues 382–385 (LGMQ), Glu405, and Arg462. Active-site residues include His507 and Glu509. The interval 532-557 (LPCSPSEAMRQQNNSAAGSSHPSLQP) is disordered. Residues 540–557 (MRQQNNSAAGSSHPSLQP) show a composition bias toward polar residues.

The protein belongs to the CTP synthase family. As to quaternary structure, homotetramer.

The enzyme catalyses UTP + L-glutamine + ATP + H2O = CTP + L-glutamate + ADP + phosphate + 2 H(+). The catalysed reaction is L-glutamine + H2O = L-glutamate + NH4(+). It carries out the reaction UTP + NH4(+) + ATP = CTP + ADP + phosphate + 2 H(+). Its pathway is pyrimidine metabolism; CTP biosynthesis via de novo pathway; CTP from UDP: step 2/2. Allosterically activated by GTP, when glutamine is the substrate; GTP has no effect on the reaction when ammonia is the substrate. The allosteric effector GTP functions by stabilizing the protein conformation that binds the tetrahedral intermediate(s) formed during glutamine hydrolysis. Inhibited by the product CTP, via allosteric rather than competitive inhibition. Functionally, catalyzes the ATP-dependent amination of UTP to CTP with either L-glutamine or ammonia as the source of nitrogen. Regulates intracellular CTP levels through interactions with the four ribonucleotide triphosphates. This is CTP synthase from Synechococcus sp. (strain CC9311).